Here is a 54-residue protein sequence, read N- to C-terminus: UPF0391 membrane protein Rfer_1875 (54 aa).

Transmembrane regions (helical) follow at residues 5 to 25 and 30 to 50; these read AVVF…GIAA and IGKI…LFGL.

This sequence belongs to the UPF0391 family.

The protein localises to the cell membrane. This is UPF0391 membrane protein Rfer_1875 from Albidiferax ferrireducens (strain ATCC BAA-621 / DSM 15236 / T118) (Rhodoferax ferrireducens).